Here is a 237-residue protein sequence, read N- to C-terminus: tRNA1(Val) (adenine(37)-N6)-methyltransferase (237 aa).

The protein belongs to the methyltransferase superfamily. tRNA (adenine-N(6)-)-methyltransferase family.

It is found in the cytoplasm. It catalyses the reaction adenosine(37) in tRNA1(Val) + S-adenosyl-L-methionine = N(6)-methyladenosine(37) in tRNA1(Val) + S-adenosyl-L-homocysteine + H(+). Its function is as follows. Specifically methylates the adenine in position 37 of tRNA(1)(Val) (anticodon cmo5UAC). The chain is tRNA1(Val) (adenine(37)-N6)-methyltransferase from Pasteurella multocida (strain Pm70).